A 209-amino-acid polypeptide reads, in one-letter code: Phosphoheptose isomerase (209 aa).

Residues 50 to 209 (IADTFREGGK…ELVEKMMGYD (160 aa)) form the SIS domain. Residue 65-67 (NGG) coordinates substrate. Zn(2+)-binding residues include H74 and E78. Substrate is bound by residues E78, 109-110 (ND), 135-137 (STS), S140, and Q188. Residues Q188 and H196 each contribute to the Zn(2+) site.

The protein belongs to the SIS family. GmhA subfamily. It depends on Zn(2+) as a cofactor.

Its subcellular location is the cytoplasm. The catalysed reaction is 2 D-sedoheptulose 7-phosphate = D-glycero-alpha-D-manno-heptose 7-phosphate + D-glycero-beta-D-manno-heptose 7-phosphate. It functions in the pathway carbohydrate biosynthesis; D-glycero-D-manno-heptose 7-phosphate biosynthesis; D-glycero-alpha-D-manno-heptose 7-phosphate and D-glycero-beta-D-manno-heptose 7-phosphate from sedoheptulose 7-phosphate: step 1/1. Catalyzes the isomerization of sedoheptulose 7-phosphate in D-glycero-D-manno-heptose 7-phosphate. The chain is Phosphoheptose isomerase from Chlorobaculum tepidum (strain ATCC 49652 / DSM 12025 / NBRC 103806 / TLS) (Chlorobium tepidum).